The following is a 417-amino-acid chain: Gamma-glutamyl phosphate reductase (417 aa).

The protein belongs to the gamma-glutamyl phosphate reductase family.

The protein resides in the cytoplasm. It catalyses the reaction L-glutamate 5-semialdehyde + phosphate + NADP(+) = L-glutamyl 5-phosphate + NADPH + H(+). It functions in the pathway amino-acid biosynthesis; L-proline biosynthesis; L-glutamate 5-semialdehyde from L-glutamate: step 2/2. Functionally, catalyzes the NADPH-dependent reduction of L-glutamate 5-phosphate into L-glutamate 5-semialdehyde and phosphate. The product spontaneously undergoes cyclization to form 1-pyrroline-5-carboxylate. In Streptococcus agalactiae serotype III (strain NEM316), this protein is Gamma-glutamyl phosphate reductase.